The sequence spans 238 residues: Uridylate kinase (238 aa).

12–15 (KLSG) lines the ATP pocket. Glycine 54 contributes to the UMP binding site. 2 residues coordinate ATP: glycine 55 and arginine 59. Residues aspartate 74 and 135-142 (TGNPYFTT) each bind UMP. 3 residues coordinate ATP: threonine 162, tyrosine 168, and aspartate 171.

The protein belongs to the UMP kinase family. In terms of assembly, homohexamer.

It localises to the cytoplasm. The enzyme catalyses UMP + ATP = UDP + ADP. The protein operates within pyrimidine metabolism; CTP biosynthesis via de novo pathway; UDP from UMP (UMPK route): step 1/1. Inhibited by UTP. Functionally, catalyzes the reversible phosphorylation of UMP to UDP. In Nitratidesulfovibrio vulgaris (strain ATCC 29579 / DSM 644 / CCUG 34227 / NCIMB 8303 / VKM B-1760 / Hildenborough) (Desulfovibrio vulgaris), this protein is Uridylate kinase.